Reading from the N-terminus, the 370-residue chain is Cytochrome b (370 aa).

The next 4 helical transmembrane spans lie at 25–45 (FGSMLLACSTLQVLTGFFLAV), 69–90 (WLMQNLHAIGASMFFICIYIHI), 105–125 (WLSGTMLLIMLMATAFFGYVL), and 170–190 (FFALHFILPFGIISLSSLHVI). Heme b contacts are provided by His75 and His89. Heme b contacts are provided by His174 and His188. His193 contacts a ubiquinone. The next 4 membrane-spanning stretches (helical) occupy residues 218–238 (YKDLLMLTIMTILLLLIVSFS), 280–300 (LGGALALTMSIIILMTVPFTH), 312–332 (FMQMTFWMFAATFLVITWTAT), and 339–358 (FTLIGQMASMLYFLFFISNP).

This sequence belongs to the cytochrome b family. The cytochrome bc1 complex contains 3 respiratory subunits (MT-CYB, CYC1 and UQCRFS1), 2 core proteins (UQCRC1 and UQCRC2) and probably 6 low-molecular weight proteins. Heme b is required as a cofactor.

It is found in the mitochondrion inner membrane. In terms of biological role, component of the ubiquinol-cytochrome c reductase complex (complex III or cytochrome b-c1 complex) that is part of the mitochondrial respiratory chain. The b-c1 complex mediates electron transfer from ubiquinol to cytochrome c. Contributes to the generation of a proton gradient across the mitochondrial membrane that is then used for ATP synthesis. The chain is Cytochrome b (MT-CYB) from Eunectes murinus (Green anaconda).